The chain runs to 444 residues: Sensor protein CiaH (444 aa).

2 helical membrane-spanning segments follow: residues 21 to 41 (FGVFTLIFSTMTLIILQVMHS) and 183 to 203 (LIVVVMASFWILSLLASLYLA). One can recognise a Histidine kinase domain in the interval 223 to 438 (NASHELRTPL…IFEVKIAIQT (216 aa)). A Phosphohistidine; by autocatalysis modification is found at His226.

The protein resides in the cell membrane. It carries out the reaction ATP + protein L-histidine = ADP + protein N-phospho-L-histidine.. Member of the two-component regulatory system CiaH/CiaR. Involved in early steps of competence regulation and in penicillin susceptibility. Probably phosphorylates CiaR. This is Sensor protein CiaH (ciaH) from Streptococcus pneumoniae serotype 4 (strain ATCC BAA-334 / TIGR4).